Here is a 114-residue protein sequence, read N- to C-terminus: uncharacterized protein (114 aa).

It to M.kandleri MK0008.

This is an uncharacterized protein from Methanocaldococcus jannaschii (strain ATCC 43067 / DSM 2661 / JAL-1 / JCM 10045 / NBRC 100440) (Methanococcus jannaschii).